Here is a 302-residue protein sequence, read N- to C-terminus: Nucleotide-binding protein SE_0548 (302 aa).

18 to 25 (GMSGAGKS) serves as a coordination point for ATP. GTP is bound at residue 69 to 72 (DLRG).

It belongs to the RapZ-like family.

In terms of biological role, displays ATPase and GTPase activities. This chain is Nucleotide-binding protein SE_0548, found in Staphylococcus epidermidis (strain ATCC 12228 / FDA PCI 1200).